We begin with the raw amino-acid sequence, 407 residues long: Phosphopentomutase (407 aa).

Asp-10, Asp-306, His-311, Asp-347, His-348, and His-359 together coordinate Mn(2+).

Belongs to the phosphopentomutase family. It depends on Mn(2+) as a cofactor.

Its subcellular location is the cytoplasm. The enzyme catalyses 2-deoxy-alpha-D-ribose 1-phosphate = 2-deoxy-D-ribose 5-phosphate. It carries out the reaction alpha-D-ribose 1-phosphate = D-ribose 5-phosphate. It participates in carbohydrate degradation; 2-deoxy-D-ribose 1-phosphate degradation; D-glyceraldehyde 3-phosphate and acetaldehyde from 2-deoxy-alpha-D-ribose 1-phosphate: step 1/2. In terms of biological role, isomerase that catalyzes the conversion of deoxy-ribose 1-phosphate (dRib-1-P) and ribose 1-phosphate (Rib-1-P) to deoxy-ribose 5-phosphate (dRib-5-P) and ribose 5-phosphate (Rib-5-P), respectively. The chain is Phosphopentomutase from Salmonella arizonae (strain ATCC BAA-731 / CDC346-86 / RSK2980).